Here is a 1488-residue protein sequence, read N- to C-terminus: Putative E3 ubiquitin-protein ligase LIN (1488 aa).

3 disordered regions span residues 297 to 330, 351 to 414, and 432 to 500; these read GFSM…EQSS, YDAS…PLRR, and IVSD…SSSS. Residues 366–380 show a composition bias toward basic and acidic residues; the sequence is EPKKNIKDEDVEPKV. The segment covering 382–411 has biased composition (polar residues); sequence RSNQKNQMNSPNISPMESPRRASNYSSTNP. Residues 432–444 are compositionally biased toward low complexity; the sequence is IVSDHSLSSSPDT. Over residues 468 to 486 the composition is skewed to polar residues; the sequence is SQTPSMNQDNENSLVLNDS. The U-box domain maps to 512–587; it reads KPPKDFVCPI…VSWKEQNPEL (76 aa). 4 WD repeats span residues 1207–1244, 1249–1290, 1412–1451, and 1456–1488; these read SSNG…PRVI, EHKK…DVYD, SLST…RVAS, and GGNT…WALD.

Expressed in roots and nodules.

It carries out the reaction S-ubiquitinyl-[E2 ubiquitin-conjugating enzyme]-L-cysteine + [acceptor protein]-L-lysine = [E2 ubiquitin-conjugating enzyme]-L-cysteine + N(6)-ubiquitinyl-[acceptor protein]-L-lysine.. The protein operates within protein modification; protein ubiquitination. In terms of biological role, putative E3 ubiquitin ligase involved in the rhizobial infection process. Plays an important role in the early steps of bacterial symbiont thread formation in roots, and in growth, differentiation and maintenance of nodules. The polypeptide is Putative E3 ubiquitin-protein ligase LIN (Medicago truncatula (Barrel medic)).